A 394-amino-acid chain; its full sequence is Phosphorylated adapter RNA export protein (394 aa).

Residues 1-18 (MALEVGDMEDGQLSDSDS) show a composition bias toward acidic residues. The tract at residues 1-33 (MALEVGDMEDGQLSDSDSDMTVAPSDRPLQLPK) is disordered. The residue at position 2 (A2) is an N-acetylalanine. Positions 2-329 (ALEVGDMEDG…KAARKRRTQV (328 aa)) are necessary for interaction with CBP80. Residues S14, S16, S65, S66, S69, and S73 each carry the phosphoserine modification. Residues 81 to 84 (KRKR) carry the Nuclear localization signal motif. A disordered region spans residues 83–111 (KRQKCFNPPPKPEPFQFGQSSQKPPVAGG). The short motif at 130 to 139 (VATELGILGM) is the Nuclear export signal element. Basic and acidic residues predominate over residues 183–193 (KKMGSKEEENG). The segment at 183 to 211 (KKMGSKEEENGQGHLKRKRPVKDRLGNRP) is disordered. Residues 198–201 (KRKR) carry the Nuclear localization signal motif. S226 bears the Phosphoserine mark. Residues 228 to 328 (EKVADEISFR…KKAARKRRTQ (101 aa)) form a sufficient for poly U RNA-binding region. Positions 279-287 (GSRRRTPGG) are necessary for poly U RNA-binding and snRNA export. The residue at position 296 (T296) is a Phosphothreonine. A phosphoserine mark is found at S356 and S368.

This sequence belongs to the PHAX family. Found in a U snRNA export complex with PHAX/RNUXA, NCBP1/CBP80, NCBP2/CBP20, RAN, XPO1 and m7G-capped RNA. Part of a precomplex with PHAX/RNUXA, NCBP1/CBP80, NCBP2/CBP20 and m7G-capped RNA. Interacts with NCBP1/CBP80. Found in a complex with snoRNA. Interacts with NCBP2/CBP20. Interacts with DDX39A; this interaction stimulates PHAX RNA binding activity. Post-translationally, phosphorylated in the nucleus. Dephosphorylated in the cytoplasm.

It localises to the nucleus. Its subcellular location is the nucleoplasm. The protein localises to the cajal body. It is found in the cytoplasm. In terms of biological role, a phosphoprotein adapter involved in the XPO1-mediated U snRNA export from the nucleus. Bridge components required for U snRNA export, the cap binding complex (CBC)-bound snRNA on the one hand and the GTPase Ran in its active GTP-bound form together with the export receptor XPO1 on the other. Its phosphorylation in the nucleus is required for U snRNA export complex assembly and export, while its dephosphorylation in the cytoplasm causes export complex disassembly. It is recycled back to the nucleus via the importin alpha/beta heterodimeric import receptor. The directionality of nuclear export is thought to be conferred by an asymmetric distribution of the GTP- and GDP-bound forms of Ran between the cytoplasm and nucleus. Its compartmentalized phosphorylation cycle may also contribute to the directionality of export. Binds strongly to m7G-capped U1 and U5 small nuclear RNAs (snRNAs) in a sequence-unspecific manner and phosphorylation-independent manner. Also plays a role in the biogenesis of U3 small nucleolar RNA (snoRNA). Involved in the U3 snoRNA transport from nucleoplasm to Cajal bodies. Binds strongly to m7G-capped U3, U8 and U13 precursor snoRNAs and weakly to trimethylated (TMG)-capped U3, U8 and U13 snoRNAs. Also binds to telomerase RNA. The polypeptide is Phosphorylated adapter RNA export protein (PHAX) (Homo sapiens (Human)).